A 919-amino-acid chain; its full sequence is MWLAAAAPSLARRLLFLGPPPPPLLLLVFSRSSRRRLHSLGLAAMPEKRPFERLPADVSPINYSLCLKPDLLDFTFEGKLEAAAQVRQATNQIVMNCADIDIITASYAPEGDEEIHATGFNYQNEDEKVTLSFPSTLQTGTGTLKIDFVGELNDKMKGFYRSKYTTPSGEVRYAAVTQFEATDARRAFPCWDEPAIKATFDISLVVPKDRVALSNMNVIDRKPYPDDENLVEVKFARTPVMSTYLVAFVVGEYDFVETRSKDGVCVRVYTPVGKAEQGKFALEVAAKTLPFYKDYFNVPYPLPKIDLIAIADFAAGAMENWGLVTYRETALLIDPKNSCSSSRQWVALVVGHELAHQWFGNLVTMEWWTHLWLNEGFASWIEYLCVDHCFPEYDIWTQFVSADYTRAQELDALDNSHPIEVSVGHPSEVDEIFDAISYSKGASVIRMLHDYIGDKDFKKGMNMYLTKFQQKNAATEDLWESLENASGKPIAAVMNTWTKQMGFPLIYVEAEQVEDDRLLRLSQKKFCAGGSYVGEDCPQWMVPITISTSEDPNQAKLKILMDKPEMNVVLKNVKPDQWVKLNLGTVGFYRTQYSSAMLESLLPGIRDLSLPPVDRLGLQNDLFSLARAGIISTVEVLKVMEAFVNEPNYTVWSDLSCNLGILSTLLSHTDFYEEIQEFVKDVFSPIGERLGWDPKPGEGHLDALLRGLVLGKLGKAGHKATLEEARRRFKDHVEGKQILSADLRSPVYLTVLKHGDGTTLDIMLKLHKQADMQEEKNRIERVLGATLLPDLIQKVLTFALSEEVRPQDTVSVIGGVAGGSKHGRKAAWKFIKDNWEELYNRYQGGFLISRLIKLSVEGFAVDKMAGEVKAFFESHPAPSAERTIQQCCENILLNAAWLKRDAESIHQYLLQRKASPPTV.

Residues Glu180 and 316–320 (GAMEN) contribute to the substrate site. Residue His352 coordinates Zn(2+). Catalysis depends on Glu353, which acts as the Proton acceptor. Zn(2+) is bound by residues His356 and Glu375. A 3'-nitrotyrosine modification is found at Tyr464. Residues 726 to 730 (RRRFK) carry the Nuclear localization signal motif.

It belongs to the peptidase M1 family. Monomer. The cofactor is Zn(2+). In terms of tissue distribution, detected in liver, epithelium of renal tubules, epithelium of small and large intestine, gastric epithelial cells, and alveoli of the lung (at protein level).

It is found in the cytoplasm. It localises to the cytosol. The protein resides in the nucleus. The catalysed reaction is Release of an N-terminal amino acid, preferentially alanine, from a wide range of peptides, amides and arylamides.. Strongly inhibited by bestatin, leuhistin, actinonin, amastatin, 1,10-phenanthroline, DFP, PCMBS, Zn(2+), Cd(2+), Co(2+), Cu(2+), Hg(2+), EDTA and puromycin. Not inhibited by PMSF, and only slightly inhibited by leupeptin and aprotinin. Activity is increased by Mg(2+) and Ca(2+). Aminopeptidase with broad substrate specificity for several peptides. Involved in proteolytic events essential for cell growth and viability. May act as regulator of neuropeptide activity. Plays a role in the antigen-processing pathway for MHC class I molecules. Involved in the N-terminal trimming of cytotoxic T-cell epitope precursors. Digests the poly-Q peptides found in many cellular proteins. Digests tau from normal brain more efficiently than tau from Alzheimer disease brain. The chain is Puromycin-sensitive aminopeptidase (NPEPPS) from Homo sapiens (Human).